The following is a 406-amino-acid chain: Tyrosine-specific transport system 2 (406 aa).

A run of 11 helical transmembrane segments spans residues 7-27, 38-58, 83-103, 119-139, 150-170, 183-203, 219-239, 279-299, 314-334, 335-355, and 376-396; these read FGSA…AMPL, LLLL…FVEV, IFAT…YITG, AMSL…FVVV, VLFI…LPKV, AFVV…VIMA, AILI…LATH, VFSS…VFEG, FVLT…YPEG, FITA…ILPI, and NFAL…PFLI.

This sequence belongs to the amino acid/polyamine transporter 2 family. Mtr/TnaB/TyrP permease subfamily.

It is found in the cell inner membrane. The catalysed reaction is L-tyrosine(in) + H(+)(in) = L-tyrosine(out) + H(+)(out). Functionally, transports tyrosine across the cytoplasmic membrane. The transport system is energized by the proton motive force. The sequence is that of Tyrosine-specific transport system 2 (tyrP-B) from Haemophilus influenzae (strain ATCC 51907 / DSM 11121 / KW20 / Rd).